The sequence spans 461 residues: Porin AaxA (461 aa).

The first 22 residues, 1-22, serve as a signal peptide directing secretion; the sequence is MSFRSVLLTALLSLSFTTTMQA.

This sequence belongs to the OprB family.

The protein localises to the cell outer membrane. Facilitates L-arginine uptake, as part of the AaxABC system. The arginine uptake by the bacterium in the macrophage may be a virulence factor against the host innate immune response. This is Porin AaxA (aaxA) from Chlamydia trachomatis serovar D (strain ATCC VR-885 / DSM 19411 / UW-3/Cx).